A 536-amino-acid chain; its full sequence is Chaperonin GroEL (536 aa).

Residues 29 to 32, 86 to 90, G412, and D493 each bind ATP; these read TLGP and DGTTT.

Belongs to the chaperonin (HSP60) family. As to quaternary structure, forms a cylinder of 14 subunits composed of two heptameric rings stacked back-to-back. Interacts with the co-chaperonin GroES.

The protein localises to the cytoplasm. The enzyme catalyses ATP + H2O + a folded polypeptide = ADP + phosphate + an unfolded polypeptide.. Functionally, together with its co-chaperonin GroES, plays an essential role in assisting protein folding. The GroEL-GroES system forms a nano-cage that allows encapsulation of the non-native substrate proteins and provides a physical environment optimized to promote and accelerate protein folding. The chain is Chaperonin GroEL from Aster yellows witches'-broom phytoplasma (strain AYWB).